The sequence spans 113 residues: Prefoldin subunit beta (113 aa).

The protein belongs to the prefoldin subunit beta family. Heterohexamer of two alpha and four beta subunits.

It is found in the cytoplasm. In terms of biological role, molecular chaperone capable of stabilizing a range of proteins. Seems to fulfill an ATP-independent, HSP70-like function in archaeal de novo protein folding. This chain is Prefoldin subunit beta, found in Methanococcus maripaludis (strain DSM 14266 / JCM 13030 / NBRC 101832 / S2 / LL).